Here is a 208-residue protein sequence, read N- to C-terminus: Protein-L-isoaspartate O-methyltransferase (208 aa).

Residue Ser59 is part of the active site.

It belongs to the methyltransferase superfamily. L-isoaspartyl/D-aspartyl protein methyltransferase family.

It is found in the cytoplasm. The enzyme catalyses [protein]-L-isoaspartate + S-adenosyl-L-methionine = [protein]-L-isoaspartate alpha-methyl ester + S-adenosyl-L-homocysteine. Catalyzes the methyl esterification of L-isoaspartyl residues in peptides and proteins that result from spontaneous decomposition of normal L-aspartyl and L-asparaginyl residues. It plays a role in the repair and/or degradation of damaged proteins. The protein is Protein-L-isoaspartate O-methyltransferase of Salmonella paratyphi A (strain ATCC 9150 / SARB42).